The primary structure comprises 142 residues: Large ribosomal subunit protein uL11 (142 aa).

The protein belongs to the universal ribosomal protein uL11 family. In terms of assembly, part of the ribosomal stalk of the 50S ribosomal subunit. Interacts with L10 and the large rRNA to form the base of the stalk. L10 forms an elongated spine to which L12 dimers bind in a sequential fashion forming a multimeric L10(L12)X complex. Post-translationally, one or more lysine residues are methylated.

Forms part of the ribosomal stalk which helps the ribosome interact with GTP-bound translation factors. The chain is Large ribosomal subunit protein uL11 from Yersinia pseudotuberculosis serotype O:1b (strain IP 31758).